A 364-amino-acid polypeptide reads, in one-letter code: S-adenosylmethionine:tRNA ribosyltransferase-isomerase (364 aa).

The protein belongs to the QueA family. In terms of assembly, monomer.

It localises to the cytoplasm. The enzyme catalyses 7-aminomethyl-7-carbaguanosine(34) in tRNA + S-adenosyl-L-methionine = epoxyqueuosine(34) in tRNA + adenine + L-methionine + 2 H(+). It functions in the pathway tRNA modification; tRNA-queuosine biosynthesis. Its function is as follows. Transfers and isomerizes the ribose moiety from AdoMet to the 7-aminomethyl group of 7-deazaguanine (preQ1-tRNA) to give epoxyqueuosine (oQ-tRNA). The chain is S-adenosylmethionine:tRNA ribosyltransferase-isomerase from Bradyrhizobium sp. (strain BTAi1 / ATCC BAA-1182).